Reading from the N-terminus, the 722-residue chain is Pentatricopeptide repeat-containing protein At4g14820 (722 aa).

PPR repeat units follow at residues 75–109, 110–140, 145–175, 176–210, 211–245, 246–276, 277–307, 308–342, 343–377, 378–408, 409–443, 444–479, and 480–514; these read ESIV…GGRL, DQFS…AFKI, DPFV…MSHR, DVVT…NVMP, DEMI…DVRM, DTHL…MSVR, NLFV…TEKK, DLVC…GIKP, DVVS…GLES, ELSI…MPRR, NVVS…NVEP, NEVT…NITP, and KLEH…SNVV. The interval 515–590 is type E motif; sequence IWGSLMSACR…EKGLSRIDQN (76 aa). Positions 591–621 are type E(+) motif; the sequence is GKSHEFLIGDKRHKQSNEIYAKLDEVVSKLK. A type DYW motif region spans residues 622-722; the sequence is LAGYVPDCGS…NGLCSCRDYW (101 aa).

The protein belongs to the PPR family. PCMP-H subfamily.

The sequence is that of Pentatricopeptide repeat-containing protein At4g14820 (PCMP-H3) from Arabidopsis thaliana (Mouse-ear cress).